The chain runs to 253 residues: Testis-expressed protein 101 (253 aa).

The first 24 residues, 1 to 24 (MAACWVHYLLLLLLGVSHQTLAQS), serve as a signal peptide directing secretion. N44, N112, N117, N121, and N162 each carry an N-linked (GlcNAc...) asparagine glycan. The 65-residue stretch at 53-117 (ETCNPGELCQ…SNYCNSSLCN (65 aa)) folds into the UPAR/Ly6 1 domain. The UPAR/Ly6 2 domain occupies 143-218 (CPTCVALGSC…KETCSYHSLL (76 aa)). A lipid anchor (GPI-anchor amidated serine) is attached at S226. A propeptide spans 227–253 (RASGRSTSLWVLELLLPAVLVALTHFP) (removed in mature form).

Interacts with VAMP3. Interacts with LY6K. Interacts with DPEP3; co-localized on the cell surface of spermatocytes, spermatids, and testicular spermatozoa, co-localized only in cytoplasmic droplets of caput and corpus epididymal sperm. Interacts with ADAM5. Post-translationally, N-glycosylated; by high mannose and/or biantennary complex and/or certain types of hybrid oligosaccharides; possesses different oligosaccharides chains according to its subcellular localization in the testis. In terms of processing, sheds from membrane raft by ACE and released from the cell surface of epididymal sperm while it passes through the caput epididymis leading to disappearance of TEX101 on spermatozoa; is essential to produce fertile spermatozoa.

Its subcellular location is the cell membrane. It is found in the membrane raft. It localises to the cytoplasmic vesicle. The protein resides in the secretory vesicle. The protein localises to the acrosome. Its subcellular location is the secreted. Its function is as follows. Plays a role in fertilization by controlling binding of sperm to zona pellucida and migration of spermatozoa into the oviduct. May play a role in signal transduction and promote protein tyrosine phosphorylation. In Cricetulus griseus (Chinese hamster), this protein is Testis-expressed protein 101.